A 306-amino-acid chain; its full sequence is MRHFLTLKDFNKEELLEMIALAQKIKAQTKQKQFVPYLERQTLGMIFEKSSTRTRVSFETGIYQLGGIGLFLSANDIQLGRGEPMKDTSRVISRMVDMVMIRTFEQSKLEEFAAYSKVPVINGLTDSYHPVQLMTDYLTMIEFGKADDPICAYVGDGNNMTHSWLMLAAKLGFELRVATPKGYECDPDIVADAMEIAKESGAKITFGNDPKEAVKGCDVVTTDTWVSMGQEDEKEIRLKAFEGYMVDEAMMSLAKSDAIFLHCLPAYRGYEVSEETFEKHAEVIFTEAENRLHAQKGIMVWLDQHC.

Carbamoyl phosphate contacts are provided by residues 51–54, Gln78, Arg102, and 129–132; these read STRT and HPVQ. L-ornithine is bound by residues Asn159, Asp223, and 227–228; that span reads SM. Residues 263–264 and Arg291 contribute to the carbamoyl phosphate site; that span reads CL.

Belongs to the aspartate/ornithine carbamoyltransferase superfamily. OTCase family.

Its subcellular location is the cytoplasm. The catalysed reaction is carbamoyl phosphate + L-ornithine = L-citrulline + phosphate + H(+). The protein operates within amino-acid biosynthesis; L-arginine biosynthesis; L-arginine from L-ornithine and carbamoyl phosphate: step 1/3. Functionally, reversibly catalyzes the transfer of the carbamoyl group from carbamoyl phosphate (CP) to the N(epsilon) atom of ornithine (ORN) to produce L-citrulline. In Sulfurovum sp. (strain NBC37-1), this protein is Ornithine carbamoyltransferase.